Consider the following 196-residue polypeptide: Small ribosomal subunit protein uS4c (196 aa).

The disordered stretch occupies residues 15–43 (LGALPGLTRKTPKSGSNQKKKFHSGKKEQ). The region spanning 89–150 (MRLDNILFRL…NQRSKRLVQN (62 aa)) is the S4 RNA-binding domain.

Belongs to the universal ribosomal protein uS4 family. In terms of assembly, part of the 30S ribosomal subunit. Contacts protein S5. The interaction surface between S4 and S5 is involved in control of translational fidelity.

Its subcellular location is the plastid. It localises to the chloroplast. One of the primary rRNA binding proteins, it binds directly to 16S rRNA where it nucleates assembly of the body of the 30S subunit. Its function is as follows. With S5 and S12 plays an important role in translational accuracy. The polypeptide is Small ribosomal subunit protein uS4c (rps4) (Melinis repens (Red Natal grass)).